The chain runs to 489 residues: Aklavinone 12-hydroxylase DnrF (489 aa).

Residues 17–18 (LG), glutamate 37, glutamine 121, and leucine 145 each bind FAD. The active-site Proton acceptor is the tyrosine 224. Position 308 (aspartate 308) interacts with FAD. Glycine 317 is an aklavinone binding site. The segment at 402-428 (VAAEDDDPEPTEDPRRPSGRPGFRAPH) is disordered.

The protein belongs to the PheA/TfdB FAD monooxygenase family. As to quaternary structure, monomer. Requires FAD as cofactor.

It carries out the reaction aklavinone + NADPH + O2 + H(+) = epsilon-rhodomycinone + NADP(+) + H2O. The protein operates within antibiotic biosynthesis; daunorubicin biosynthesis. It functions in the pathway antibiotic biosynthesis; carminomycin biosynthesis. Its pathway is antibiotic biosynthesis; rhodomycin biosynthesis. It participates in antibiotic biosynthesis; doxorubicin biosynthesis. Functionally, involved in the biosynthesis of the anthracyclines carminomycin, rhodomycin, daunorubicin (daunomycin) and doxorubicin (adriamycin) which are aromatic polyketide antibiotics that exhibit high cytotoxicity and are widely applied in the chemotherapy of a variety of cancers. Catalyzes the incorporation of a hydroxyl group at position C-11 of aklavinone, resulting in epsilon-rhodomycinone. This Streptomyces peucetius subsp. caesius protein is Aklavinone 12-hydroxylase DnrF (dnrF).